The following is a 445-amino-acid chain: Phosphoglucosamine mutase (445 aa).

Ser-102 acts as the Phosphoserine intermediate in catalysis. 4 residues coordinate Mg(2+): Ser-102, Asp-241, Asp-243, and Asp-245. Residue Ser-102 is modified to Phosphoserine.

The protein belongs to the phosphohexose mutase family. The cofactor is Mg(2+). Activated by phosphorylation.

The catalysed reaction is alpha-D-glucosamine 1-phosphate = D-glucosamine 6-phosphate. Functionally, catalyzes the conversion of glucosamine-6-phosphate to glucosamine-1-phosphate. This Shewanella baltica (strain OS155 / ATCC BAA-1091) protein is Phosphoglucosamine mutase.